A 542-amino-acid polypeptide reads, in one-letter code: Chaperonin GroEL (542 aa).

Residues 29–32 (TLGP), 86–90 (DGTTT), glycine 413, 478–480 (DAL), and aspartate 494 contribute to the ATP site.

This sequence belongs to the chaperonin (HSP60) family. Forms a cylinder of 14 subunits composed of two heptameric rings stacked back-to-back. Interacts with the co-chaperonin GroES.

The protein resides in the cytoplasm. The catalysed reaction is ATP + H2O + a folded polypeptide = ADP + phosphate + an unfolded polypeptide.. Its function is as follows. Together with its co-chaperonin GroES, plays an essential role in assisting protein folding. The GroEL-GroES system forms a nano-cage that allows encapsulation of the non-native substrate proteins and provides a physical environment optimized to promote and accelerate protein folding. In Clostridioides difficile (strain 630) (Peptoclostridium difficile), this protein is Chaperonin GroEL.